A 205-amino-acid chain; its full sequence is MAFVVGLTGGIASGKTTIANMFAELGATIIDADIVARQVVTKGSPLFLKIVQHFGQQVLTTQGELNRAQLRQLIFANQVEKNWLNNLLHPAIRREMLIQLRQARGPYVLFVVPLLIENKLIEFCQRVLVIDVYPEVQLARALTRDRSNIATIRGIMASQVNRLTRLSYANDIIENNLPLAESLERLQMQVQQLHQYYLTLATQQE.

One can recognise a DPCK domain in the interval 4–204 (VVGLTGGIAS…QYYLTLATQQ (201 aa)). 12 to 17 (ASGKTT) is an ATP binding site.

It belongs to the CoaE family.

It is found in the cytoplasm. It carries out the reaction 3'-dephospho-CoA + ATP = ADP + CoA + H(+). The protein operates within cofactor biosynthesis; coenzyme A biosynthesis; CoA from (R)-pantothenate: step 5/5. Its function is as follows. Catalyzes the phosphorylation of the 3'-hydroxyl group of dephosphocoenzyme A to form coenzyme A. This is Dephospho-CoA kinase from Haemophilus ducreyi (strain 35000HP / ATCC 700724).